Consider the following 413-residue polypeptide: Na(+)-translocating NADH-quinone reductase subunit B (413 aa).

3 consecutive transmembrane segments (helical) span residues 56 to 76, 123 to 143, and 169 to 189; these read MMIL…YNVG, LLGA…GGFW, and IVPP…GVVI. At Thr236 the chain carries FMN phosphoryl threonine. 5 helical membrane-spanning segments follow: residues 270–290, 297–317, 322–342, 358–378, and 381–401; these read GSIG…IIFG, IVAG…WIGS, LFAM…GMIF, WWYG…NPAY, and GMML…YVVV.

Belongs to the NqrB/RnfD family. As to quaternary structure, composed of six subunits; NqrA, NqrB, NqrC, NqrD, NqrE and NqrF. Requires FMN as cofactor.

The protein resides in the cell inner membrane. It carries out the reaction a ubiquinone + n Na(+)(in) + NADH + H(+) = a ubiquinol + n Na(+)(out) + NAD(+). Its function is as follows. NQR complex catalyzes the reduction of ubiquinone-1 to ubiquinol by two successive reactions, coupled with the transport of Na(+) ions from the cytoplasm to the periplasm. NqrA to NqrE are probably involved in the second step, the conversion of ubisemiquinone to ubiquinol. This Yersinia pestis protein is Na(+)-translocating NADH-quinone reductase subunit B.